A 260-amino-acid chain; its full sequence is 4-hydroxy-tetrahydrodipicolinate reductase (260 aa).

NAD(+)-binding positions include 12–17 (GFRGKM), 92–94 (GTT), and 118–121 (APNF). Histidine 148 acts as the Proton donor/acceptor in catalysis. (S)-2,3,4,5-tetrahydrodipicolinate is bound at residue histidine 149. The Proton donor role is filled by lysine 152. 158-159 (GT) is a binding site for (S)-2,3,4,5-tetrahydrodipicolinate.

The protein belongs to the DapB family.

The protein resides in the cytoplasm. The enzyme catalyses (S)-2,3,4,5-tetrahydrodipicolinate + NAD(+) + H2O = (2S,4S)-4-hydroxy-2,3,4,5-tetrahydrodipicolinate + NADH + H(+). It carries out the reaction (S)-2,3,4,5-tetrahydrodipicolinate + NADP(+) + H2O = (2S,4S)-4-hydroxy-2,3,4,5-tetrahydrodipicolinate + NADPH + H(+). It functions in the pathway amino-acid biosynthesis; L-lysine biosynthesis via DAP pathway; (S)-tetrahydrodipicolinate from L-aspartate: step 4/4. Catalyzes the conversion of 4-hydroxy-tetrahydrodipicolinate (HTPA) to tetrahydrodipicolinate. The sequence is that of 4-hydroxy-tetrahydrodipicolinate reductase from Lactococcus lactis subsp. cremoris (strain MG1363).